A 224-amino-acid polypeptide reads, in one-letter code: Peptidyl-prolyl cis-trans isomerase FKBP3 (224 aa).

At A2 the chain carries N-acetylalanine. S36 is modified (phosphoserine). Residues N87–G119 form a disordered region. Residues K89–E102 show a composition bias toward basic and acidic residues. The residue at position 99 (K99) is an N6-acetyllysine. One can recognise a PPIase FKBP-type domain in the interval G128 to D224. S152 carries the phosphoserine modification. The residue at position 170 (K170) is an N6-acetyllysine.

It belongs to the FKBP-type PPIase family.

Its subcellular location is the nucleus. The enzyme catalyses [protein]-peptidylproline (omega=180) = [protein]-peptidylproline (omega=0). Its activity is regulated as follows. Inhibited preferentially by rapamycin over FK506. Its function is as follows. FK506- and rapamycin-binding proteins (FKBPs) constitute a family of receptors for the two immunosuppressants which inhibit T-cell proliferation by arresting two distinct cytoplasmic signal transmission pathways. PPIases accelerate the folding of proteins. This Oryctolagus cuniculus (Rabbit) protein is Peptidyl-prolyl cis-trans isomerase FKBP3 (FKBP3).